The chain runs to 121 residues: Heme-degrading monooxygenase (121 aa).

One can recognise an ABM domain in the interval 2–101 (IIVTNTIKVE…EQREDRKGIV (100 aa)). N6 serves as a coordination point for Fe cation. The interval 76-98 (KSDSFKKAHGRTKDTREQREDRK) is disordered. Residues 78–98 (DSFKKAHGRTKDTREQREDRK) show a composition bias toward basic and acidic residues. H84 contacts heme.

Belongs to the antibiotic biosynthesis monooxygenase family. Heme-degrading monooxygenase IsdG subfamily. As to quaternary structure, homodimer.

The protein resides in the cytoplasm. The enzyme catalyses heme b + 3 reduced [NADPH--hemoprotein reductase] + 3 O2 = biliverdin IXalpha + CO + Fe(2+) + 3 oxidized [NADPH--hemoprotein reductase] + 3 H2O + H(+). In terms of biological role, allows bacterial pathogens to use the host heme as an iron source. Catalyzes the oxidative degradation of the heme macrocyclic porphyrin ring to the biliverdin in the presence of a suitable electron donor such as ascorbate or NADPH--cytochrome P450 reductase, with subsequent release of free iron. The chain is Heme-degrading monooxygenase from Listeria welshimeri serovar 6b (strain ATCC 35897 / DSM 20650 / CCUG 15529 / CIP 8149 / NCTC 11857 / SLCC 5334 / V8).